A 114-amino-acid polypeptide reads, in one-letter code: Putative small ubiquitin-related modifier 4 (114 aa).

A disordered region spans residues 1-20 (MSTTSRVGSNEVKMEGQKRK). The Ubiquitin-like domain maps to 26-104 (THVTLKVKGQ…IDAMLCQQSG (79 aa)). Residue Gly104 forms a Glycyl lysine isopeptide (Gly-Lys) (interchain with K-? in acceptor proteins) linkage.

The protein belongs to the ubiquitin family. SUMO subfamily. As to quaternary structure, interacts with SAE2, SCE1, SIZ1 and MMS21 Covalently attached to a number of proteins.

The protein resides in the nucleus. Its subcellular location is the cytoplasm. Ubiquitin-like protein which can be covalently attached to target lysines as a monomer. Does not seem to be involved in protein degradation and may function as an antagonist of ubiquitin in the degradation process. The protein is Putative small ubiquitin-related modifier 4 (SUMO4) of Arabidopsis thaliana (Mouse-ear cress).